A 136-amino-acid chain; its full sequence is Large-conductance mechanosensitive channel (136 aa).

Helical transmembrane passes span 10–30 (FAMR…AAFG) and 76–96 (GVFI…FMAI).

The protein belongs to the MscL family. Homopentamer.

Its subcellular location is the cell inner membrane. In terms of biological role, channel that opens in response to stretch forces in the membrane lipid bilayer. May participate in the regulation of osmotic pressure changes within the cell. This chain is Large-conductance mechanosensitive channel, found in Escherichia coli O139:H28 (strain E24377A / ETEC).